A 1117-amino-acid chain; its full sequence is Cytospin-A (1117 aa).

Disordered stretches follow at residues 1-176 (MKKA…NQIS), 293-323 (SLSPEITPGNQSDGGGTLTSSVEGSAPGSVE), and 358-390 (SSDDALDAPSSSESEGIPSIERSRKGSSGNASE). Over residues 45–90 (TAASLSKTKSSDDLLAGMAGGVTVTNGVKGKKSTCPSAAPSASAPA) the composition is skewed to low complexity. Over residues 93–117 (TVENKSKISTGTASSTKRSTSTGNK) the composition is skewed to polar residues. Composition is skewed to basic and acidic residues over residues 120–131 (SSTRERLRERTR) and 158–171 (TATECDVRMSKSKS). Positions 168–280 (KSKSDNQISD…LNALGFSLEQ (113 aa)) form a coiled coil. A compositionally biased stretch (polar residues) spans 293 to 303 (SLSPEITPGNQ). Residues 358–377 (SSDDALDAPSSSESEGIPSI) show a composition bias toward low complexity. Residues Ser-384, Ser-385, and Ser-389 each carry the phosphoserine modification. Coiled coils occupy residues 394 to 449 (ACLT…MESL) and 487 to 807 (RYME…RGRV). Ser-868, Ser-881, and Ser-887 each carry phosphoserine. Positions 920-997 (TSSASRPASL…PTTRSRIREE (78 aa)) are disordered. Over residues 946–956 (RSSEEVKRDIS) the composition is skewed to basic and acidic residues. Positions 971–990 (TTSPQLSLSSSPTASVTPTT) are enriched in low complexity. The 106-residue stretch at 1011-1116 (GSKRNALLKW…YVTAIYKYFE (106 aa)) folds into the Calponin-homology (CH) domain.

It belongs to the cytospin-A family. As to quaternary structure, may interact with both microtubules and actin cytoskeleton.

It is found in the cytoplasm. Its subcellular location is the cytoskeleton. The protein resides in the spindle. The protein localises to the cell junction. It localises to the gap junction. Its function is as follows. Involved in cytokinesis and spindle organization. May play a role in actin cytoskeleton organization and microtubule stabilization and hence required for proper cell adhesion and migration. The sequence is that of Cytospin-A (SPECC1L) from Homo sapiens (Human).